A 316-amino-acid polypeptide reads, in one-letter code: Lys-63-specific deubiquitinase BRCC36 (316 aa).

Ala-2 is subject to N-acetylalanine. Residues 12 to 179 form the MPN domain; that stretch reads VHLESDAFLV…YTCFQSIQAQ (168 aa). Residues His-122, His-124, and Asp-135 each coordinate Zn(2+). The JAMM motif motif lies at 122 to 135; it reads HSHPHITVWPSHVD. Ser-258 is modified (phosphoserine).

This sequence belongs to the peptidase M67A family. BRCC36 subfamily. As to quaternary structure, component of the ARISC complex, at least composed of UIMC1/RAP80, ABRAXAS1, BRCC3/BRCC36, BABAM2 and BABAM1/NBA1. Component of the BRCA1-A complex, at least composed of BRCA1, BARD1, UIMC1/RAP80, ABRAXAS1, BRCC3/BRCC36, BABAM2 and BABAM1/NBA1. In the BRCA1-A complex, interacts directly with ABRAXAS1 and BABAM2. Component of the BRISC complex, at least composed of ABRAXAS2, BRCC3/BRCC36, BABAM2 and BABAM1/NBA1. Identified in a complex with SHMT2 and the other subunits of the BRISC complex. In the BRISC complex, interacts directly with ABRAXAS2. Identified in a complex with ABRAXAS2 and NUMA1. The BRISC complex interacts with the CSN complex. Component of the BRCA1/BRCA2 containing complex (BRCC), which also contains BRCA1, BRCA2, BARD1, BABAM2 and RAD51. BRCC is a ubiquitin E3 ligase complex that enhances cellular survival following DNA damage. Interacts with BRCA1. Binds polyubiquitin. Interacts with PWWP2B. Interacts with HDAC1; this interaction is enhanced in the presence of PWWP2B. Zn(2+) serves as cofactor.

It localises to the nucleus. The protein resides in the cytoplasm. Its subcellular location is the cytoskeleton. The protein localises to the spindle pole. Its function is as follows. Metalloprotease that specifically cleaves 'Lys-63'-linked polyubiquitin chains. Does not have activity toward 'Lys-48'-linked polyubiquitin chains. Component of the BRCA1-A complex, a complex that specifically recognizes 'Lys-63'-linked ubiquitinated histones H2A and H2AX at DNA lesions sites, leading to target the BRCA1-BARD1 heterodimer to sites of DNA damage at double-strand breaks (DSBs). In the BRCA1-A complex, it specifically removes 'Lys-63'-linked ubiquitin on histones H2A and H2AX, antagonizing the RNF8-dependent ubiquitination at double-strand breaks (DSBs). Catalytic subunit of the BRISC complex, a multiprotein complex that specifically cleaves 'Lys-63'-linked ubiquitin in various substrates. Mediates the specific 'Lys-63'-specific deubiquitination associated with the COP9 signalosome complex (CSN), via the interaction of the BRISC complex with the CSN complex. The BRISC complex is required for normal mitotic spindle assembly and microtubule attachment to kinetochores via its role in deubiquitinating NUMA1. Plays a role in interferon signaling via its role in the deubiquitination of the interferon receptor IFNAR1; deubiquitination increases IFNAR1 activity by enhancing its stability and cell surface expression. Acts as a regulator of the NLRP3 inflammasome by mediating deubiquitination of NLRP3, leading to NLRP3 inflammasome assembly. Down-regulates the response to bacterial lipopolysaccharide (LPS) via its role in IFNAR1 deubiquitination. Deubiquitinates HDAC1 and PWWP2B leading to their stabilization. This is Lys-63-specific deubiquitinase BRCC36 (BRCC3) from Callithrix jacchus (White-tufted-ear marmoset).